We begin with the raw amino-acid sequence, 66 residues long: Large ribosomal subunit protein uL29 (66 aa).

The protein belongs to the universal ribosomal protein uL29 family.

This Borrelia turicatae (strain 91E135) protein is Large ribosomal subunit protein uL29.